A 219-amino-acid chain; its full sequence is Charged multivesicular body protein 5 (219 aa).

The span at 1 to 10 (MNRFFGKAKP) shows a compositional bias: basic residues. The disordered stretch occupies residues 1 to 21 (MNRFFGKAKPKAPPPSLTDCI). Positions 26–179 (SRAESIDKKI…LGDELLADED (154 aa)) form a coiled coil. Serine 86 carries the post-translational modification Phosphoserine. The interval 188 to 219 (SAPAIPEGVPTDTKNKDGVLVDEFGLPQIPAS) is disordered.

It belongs to the SNF7 family. In terms of assembly, probable peripherally associated component of the endosomal sorting required for transport complex III (ESCRT-III). ESCRT-III components are thought to multimerize to form a flat lattice on the perimeter membrane of the endosome. Several assembly forms of ESCRT-III may exist that interact and act sequentially. Interacts with VTA1. Interacts with CHMP2A. Interacts with VTA1; the interaction involves soluble CHMP5. Interacts with NOD2. Interacts with BROX. In terms of processing, ISGylated. Isgylation inhibits its interaction with VTA1.

It is found in the cytoplasm. The protein localises to the cytosol. The protein resides in the endosome membrane. It localises to the midbody. Its function is as follows. Probable peripherally associated component of the endosomal sorting required for transport complex III (ESCRT-III) which is involved in multivesicular bodies (MVBs) formation and sorting of endosomal cargo proteins into MVBs. MVBs contain intraluminal vesicles (ILVs) that are generated by invagination and scission from the limiting membrane of the endosome and mostly are delivered to lysosomes enabling degradation of membrane proteins, such as stimulated growth factor receptors, lysosomal enzymes and lipids. The MVB pathway appears to require the sequential function of ESCRT-O, -I,-II and -III complexes. ESCRT-III proteins mostly dissociate from the invaginating membrane before the ILV is released. The ESCRT machinery also functions in topologically equivalent membrane fission events, such as the terminal stages of cytokinesis. ESCRT-III proteins are believed to mediate the necessary vesicle extrusion and/or membrane fission activities, possibly in conjunction with the AAA ATPase VPS4. This is Charged multivesicular body protein 5 (Chmp5) from Mus musculus (Mouse).